The following is a 217-amino-acid chain: Adenosylcobinamide-GDP ribazoletransferase (217 aa).

Transmembrane regions (helical) follow at residues 6–26 (ALLS…FKCA), 39–61 (GPAA…LLLM), 95–115 (GTGG…STAS), 116–136 (PLQL…VAAF), and 162–182 (ALAV…AVAL).

The protein belongs to the CobS family. It depends on Mg(2+) as a cofactor.

The protein localises to the cell membrane. It catalyses the reaction alpha-ribazole + adenosylcob(III)inamide-GDP = adenosylcob(III)alamin + GMP + H(+). The catalysed reaction is alpha-ribazole 5'-phosphate + adenosylcob(III)inamide-GDP = adenosylcob(III)alamin 5'-phosphate + GMP + H(+). Its pathway is cofactor biosynthesis; adenosylcobalamin biosynthesis; adenosylcobalamin from cob(II)yrinate a,c-diamide: step 7/7. Joins adenosylcobinamide-GDP and alpha-ribazole to generate adenosylcobalamin (Ado-cobalamin). Also synthesizes adenosylcobalamin 5'-phosphate from adenosylcobinamide-GDP and alpha-ribazole 5'-phosphate. The protein is Adenosylcobinamide-GDP ribazoletransferase of Pyrobaculum calidifontis (strain DSM 21063 / JCM 11548 / VA1).